Reading from the N-terminus, the 500-residue chain is MINVSFLGLMSGISVLLKTTVIVVGIFEGSNHLEDNGALEGYNDKIMEIVNGYQSFDGKFAEVLPIIGLEKDFPVVVVIGLGKSEDFDENKALKVGGVIYSELNRMKVPDASIVINTDSNVSANIGYGALLRSFKFDKYFVEKKDKNSVYLNKLVLFSKNDPQEVTALFNDLKAEGESIFLARSFVSEPPNILYPETYAQMIYEELSKVGVTVEVFDEDYMKANQMMALLGVGQGSAKKSRLVVMKWNGGDESESPIAFVGKGVTFDTGGISLKPSKGMWDMKYDMAGSASVVGIMRTLAARKAKVNAVGVVGLVENSVDGNAQRPSDVVISMSGQTIEVLNTDAEGRLVLADALWYTQEMFTPKLMVDLATLTGAVVVALGNNQYAGLFSNDDAIANQLIVAGNESGEKLWRLPLDEAYDKLIDSSIADMQNISTKGYGADSITAAQFLQRFVNGVPWVHLDIAGMAWDYEGTEICPKGATGFGVRLLNRFVSKYYESH.

Mn(2+) is bound by residues lysine 262 and aspartate 267. The active site involves lysine 274. Mn(2+) is bound by residues aspartate 285, aspartate 344, and glutamate 346. Arginine 348 is a catalytic residue.

The protein belongs to the peptidase M17 family. Requires Mn(2+) as cofactor.

Its subcellular location is the cytoplasm. It carries out the reaction Release of an N-terminal amino acid, Xaa-|-Yaa-, in which Xaa is preferably Leu, but may be other amino acids including Pro although not Arg or Lys, and Yaa may be Pro. Amino acid amides and methyl esters are also readily hydrolyzed, but rates on arylamides are exceedingly low.. The enzyme catalyses Release of an N-terminal amino acid, preferentially leucine, but not glutamic or aspartic acids.. Presumably involved in the processing and regular turnover of intracellular proteins. Catalyzes the removal of unsubstituted N-terminal amino acids from various peptides. This is Probable cytosol aminopeptidase from Ehrlichia ruminantium (strain Gardel).